The primary structure comprises 342 residues: Heat-inducible transcription repressor HrcA (342 aa).

It belongs to the HrcA family.

In terms of biological role, negative regulator of class I heat shock genes (grpE-dnaK-dnaJ and groELS operons). Prevents heat-shock induction of these operons. This is Heat-inducible transcription repressor HrcA from Leptospira borgpetersenii serovar Hardjo-bovis (strain JB197).